The following is an 840-amino-acid chain: Telomere length regulation protein TEL2 homolog (840 aa).

At M1 the chain carries N-acetylmethionine. 3 positions are modified to hydroxyproline: P374, P419, and P422. A disordered region spans residues 443-497; that stretch reads PEPAGDCSSVSRGPSPAPVDTESPVEMPEKAVESDVPPTQPQGSDSELDSDDEFI. At S457 the chain carries Phosphoserine. S486 bears the Phosphoserine; by CK2 mark. Phosphoserine is present on residues S488, S492, and S837. Residues 488 to 497 are compositionally biased toward acidic residues; it reads SELDSDDEFI.

The protein belongs to the TEL2 family. Component of the TTT complex composed of TELO2, TTI1 and TTI2. Interacts with ATM, ATR, MTOR, PRKDC, RUVBL2, TTI1, TTI2, SMG1 and TRRAP. Component of the mTORC1 and mTORC2 complexes. Interacts (phosphorylated form) with PIH1D1. Interaction with PIH1D1 mediates interaction of TELO2 with the R2TP complex composed of RUVBL1, RUVBL2, PIH1D1, and RPAP3. Post-translationally, hydroxylation by PHD3 is required for a proper interaction with ATR, and activation of the ATR/CHK1/p53 pathway following DNA damage. In terms of processing, phosphorylated at Ser-486 by CK2 following growth factor deprivation, leading to its subsequent ubiquitination by the SCF(FBXO9) complex. Phosphorylation by CK2 only takes place when TELO2 is bound to mTORC1, not mTORC2; leading to selective ubiquitination of mTORC1-associated protein. Ubiquitinated by the SCF(FBXO9) complex following phosphorylation by CK2 in response to growth factor deprivation, leading to its degradation by the proteasome. Only mTORC1-associated protein is ubiquitinated and degraded, leading to selective inactivation of mTORC1 to restrain cell growth and protein translation, while mTORC2 is activated due to the relief of feedback inhibition by mTORC1.

It is found in the cytoplasm. It localises to the membrane. The protein resides in the nucleus. The protein localises to the chromosome. Its subcellular location is the telomere. Regulator of the DNA damage response (DDR). Part of the TTT complex that is required to stabilize protein levels of the phosphatidylinositol 3-kinase-related protein kinase (PIKK) family proteins. The TTT complex is involved in the cellular resistance to DNA damage stresses, like ionizing radiation (IR), ultraviolet (UV) and mitomycin C (MMC). Together with the TTT complex and HSP90 may participate in the proper folding of newly synthesized PIKKs. Promotes assembly, stabilizes and maintains the activity of mTORC1 and mTORC2 complexes, which regulate cell growth and survival in response to nutrient and hormonal signals. May be involved in telomere length regulation. The protein is Telomere length regulation protein TEL2 homolog (Telo2) of Mus musculus (Mouse).